Here is a 248-residue protein sequence, read N- to C-terminus: Sugar fermentation stimulation protein homolog (248 aa).

Belongs to the SfsA family.

The protein is Sugar fermentation stimulation protein homolog of Methylorubrum extorquens (strain CM4 / NCIMB 13688) (Methylobacterium extorquens).